The chain runs to 120 residues: Glycine cleavage system H protein (120 aa).

Residues 17-99 (VATVGITTYA…QGAGWFFKLK (83 aa)) enclose the Lipoyl-binding domain. Lysine 58 bears the N6-lipoyllysine mark.

It belongs to the GcvH family. As to quaternary structure, the glycine cleavage system is composed of four proteins: P, T, L and H. Requires (R)-lipoate as cofactor.

In terms of biological role, the glycine cleavage system catalyzes the degradation of glycine. The H protein shuttles the methylamine group of glycine from the P protein to the T protein. This Rhizobium etli (strain CIAT 652) protein is Glycine cleavage system H protein.